The primary structure comprises 507 residues: Glutamate--tRNA ligase (507 aa).

The 'HIGH' region signature appears at 14 to 24; sequence PSPTGPLHIGG. Residues 262–266 carry the 'KMSKS' region motif; it reads KLSKR. Lys-265 provides a ligand contact to ATP.

The protein belongs to the class-I aminoacyl-tRNA synthetase family. Glutamate--tRNA ligase type 1 subfamily. Monomer.

The protein resides in the cytoplasm. The enzyme catalyses tRNA(Glu) + L-glutamate + ATP = L-glutamyl-tRNA(Glu) + AMP + diphosphate. Catalyzes the attachment of glutamate to tRNA(Glu) in a two-step reaction: glutamate is first activated by ATP to form Glu-AMP and then transferred to the acceptor end of tRNA(Glu). The polypeptide is Glutamate--tRNA ligase (Porphyromonas gingivalis (strain ATCC 33277 / DSM 20709 / CIP 103683 / JCM 12257 / NCTC 11834 / 2561)).